A 235-amino-acid chain; its full sequence is tRNA (adenine(37)-N6)-methyltransferase (235 aa).

The region spanning 6–147 is the TsaA-like domain; sequence FEQIGVIRSP…YLPFAESLPD (142 aa). S-adenosyl-L-methionine is bound by residues 23–25, 64–65, arginine 92, and 127–130; these read PRQ, HQ, and VDGT.

It belongs to the tRNA methyltransferase O family. In terms of assembly, homodimer.

The enzyme catalyses N(6)-L-threonylcarbamoyladenosine(37) in tRNA + S-adenosyl-L-methionine = N(6)-methyl,N(6)-L-threonylcarbamoyladenosine(37) in tRNA + S-adenosyl-L-homocysteine + H(+). In terms of biological role, S-adenosyl-L-methionine-dependent methyltransferase responsible for the addition of the methyl group in the formation of N6-methyl-N6-threonylcarbamoyladenosine at position 37 (m(6)t(6)A37) of the tRNA anticodon loop of tRNA(Thr)(GGU) that read codons starting with adenosine. The methyl group of m(6)t(6)A37 appears to slightly improve the efficiency of the tRNA decoding ability. The protein is tRNA (adenine(37)-N6)-methyltransferase of Escherichia coli (strain K12).